Consider the following 64-residue polypeptide: Large ribosomal subunit protein bL33 (64 aa).

It belongs to the bacterial ribosomal protein bL33 family.

This Microcystis aeruginosa (strain NIES-843 / IAM M-2473) protein is Large ribosomal subunit protein bL33.